We begin with the raw amino-acid sequence, 794 residues long: Phosphoribosylformylglycinamidine synthase subunit PurL (794 aa).

The active site involves His-47. Tyr-50 and Lys-89 together coordinate ATP. Residue Glu-91 participates in Mg(2+) binding. Residues 92-95 (SHNH) and Arg-114 each bind substrate. Catalysis depends on His-93, which acts as the Proton acceptor. Mg(2+) is bound at residue Asp-115. Gln-238 serves as a coordination point for substrate. Residue Asp-266 participates in Mg(2+) binding. 310-312 (ESQ) contributes to the substrate binding site. Asp-522 and Gly-559 together coordinate ATP. Asn-560 is a Mg(2+) binding site. Ser-562 is a substrate binding site.

This sequence belongs to the FGAMS family. In terms of assembly, monomer. Part of the FGAM synthase complex composed of 1 PurL, 1 PurQ and 2 PurS subunits.

The protein localises to the cytoplasm. The catalysed reaction is N(2)-formyl-N(1)-(5-phospho-beta-D-ribosyl)glycinamide + L-glutamine + ATP + H2O = 2-formamido-N(1)-(5-O-phospho-beta-D-ribosyl)acetamidine + L-glutamate + ADP + phosphate + H(+). Its pathway is purine metabolism; IMP biosynthesis via de novo pathway; 5-amino-1-(5-phospho-D-ribosyl)imidazole from N(2)-formyl-N(1)-(5-phospho-D-ribosyl)glycinamide: step 1/2. Its function is as follows. Part of the phosphoribosylformylglycinamidine synthase complex involved in the purines biosynthetic pathway. Catalyzes the ATP-dependent conversion of formylglycinamide ribonucleotide (FGAR) and glutamine to yield formylglycinamidine ribonucleotide (FGAM) and glutamate. The FGAM synthase complex is composed of three subunits. PurQ produces an ammonia molecule by converting glutamine to glutamate. PurL transfers the ammonia molecule to FGAR to form FGAM in an ATP-dependent manner. PurS interacts with PurQ and PurL and is thought to assist in the transfer of the ammonia molecule from PurQ to PurL. This Prochlorococcus marinus (strain MIT 9303) protein is Phosphoribosylformylglycinamidine synthase subunit PurL.